The sequence spans 173 residues: T-cell receptor beta-1 chain C region (173 aa).

The interval 1–146 is c region; that stretch reads EDLRNVTPPK…GVLSATILYE (146 aa). Cys-31 and Cys-71 are joined by a disulfide. Residues Asn-67 and Asn-116 are each glycosylated (N-linked (GlcNAc...) asparagine). Residues 146–167 traverse the membrane as a helical segment; it reads EILLGKATLYAVLVSTLVVMAM. Topologically, residues 168–173 are cytoplasmic; it reads VKRKNS.

It localises to the membrane. This is T-cell receptor beta-1 chain C region from Mus musculus (Mouse).